An 83-amino-acid chain; its full sequence is Cell division topological specificity factor (83 aa).

This sequence belongs to the MinE family.

In terms of biological role, prevents the cell division inhibition by proteins MinC and MinD at internal division sites while permitting inhibition at polar sites. This ensures cell division at the proper site by restricting the formation of a division septum at the midpoint of the long axis of the cell. The protein is Cell division topological specificity factor of Buchnera aphidicola subsp. Acyrthosiphon pisum (strain 5A).